Here is a 546-residue protein sequence, read N- to C-terminus: Probable acyl-activating enzyme 21 (546 aa).

It belongs to the ATP-dependent AMP-binding enzyme family.

May act as an acid--thiol ligase that activates carboxylic acids by forming acyl-CoAs. This chain is Probable acyl-activating enzyme 21 (AEE21), found in Arabidopsis thaliana (Mouse-ear cress).